We begin with the raw amino-acid sequence, 335 residues long: Ornithine carbamoyltransferase (335 aa).

Carbamoyl phosphate-binding positions include 56-59, glutamine 83, arginine 107, and 134-137; these read STRT and HPTQ. Residues asparagine 168, aspartate 232, and 236 to 237 contribute to the L-ornithine site; that span reads SM. Carbamoyl phosphate-binding positions include 274–275 and arginine 320; that span reads CL.

It belongs to the aspartate/ornithine carbamoyltransferase superfamily. OTCase family.

It is found in the cytoplasm. It catalyses the reaction carbamoyl phosphate + L-ornithine = L-citrulline + phosphate + H(+). It functions in the pathway amino-acid biosynthesis; L-arginine biosynthesis; L-arginine from L-ornithine and carbamoyl phosphate: step 1/3. Its function is as follows. Reversibly catalyzes the transfer of the carbamoyl group from carbamoyl phosphate (CP) to the N(epsilon) atom of ornithine (ORN) to produce L-citrulline. This chain is Ornithine carbamoyltransferase, found in Yersinia pestis bv. Antiqua (strain Nepal516).